Here is a 386-residue protein sequence, read N- to C-terminus: Probable copper-dependent oxygenase M1 (386 aa).

The N-terminal stretch at 1–22 (MLRMKKICTAFLTIALCTHVLA) is a signal peptide. Asparagine 86 is a glycosylation site (N-linked (GlcNAc...) asparagine). A helical membrane pass occupies residues 334-354 (FVVPIAAIAFIALTIGAGYVF).

This sequence belongs to the clz3 oxygenase family.

The protein resides in the membrane. It participates in secondary metabolite biosynthesis. Probable copper-dependent oxygenase; part of the gene cluster that mediates the biosynthesis of squalestatin S1 (SQS1, also known as zaragozic acid A), a heavily oxidized fungal polyketide that offers potent cholesterol lowering activity by targeting squalene synthase (SS). SQS1 is composed of a 2,8-dioxobicyclic[3.2.1]octane-3,4,5-tricarboxyclic acid core that is connected to two lipophilic polyketide arms. These initial steps feature the priming of an unusual benzoic acid starter unit onto the highly reducing polyketide synthase pks2, followed by oxaloacetate extension and product release to generate a tricarboxylic acid containing product. The phenylalanine ammonia lyase (PAL) M7 and the acyl-CoA ligase M9 are involved in transforming phenylalanine into benzoyl-CoA. The citrate synthase-like protein R3 is involved in connecting the C-alpha-carbons of the hexaketide chain and oxaloacetate to afford the tricarboxylic acid unit. The potential hydrolytic enzymes, M8 and M10, are in close proximity to pks2 and may participate in product release. On the other side, the tetraketide arm is synthesized by a the squalestatin tetraketide synthase pks1 and enzymatically esterified to the core in the last biosynthetic step, by the acetyltransferase M4. The biosynthesis of the tetraketide must involve 3 rounds of chain extension. After the first and second rounds methyl-transfer occurs, and in all rounds of extension the ketoreductase and dehydratase are active. The enoyl reductase and C-MeT of pks1 are not active in the final round of extension. The acetyltransferase M4 appears to have a broad substrate selectivity for its acyl CoA substrate, allowing the in vitro synthesis of novel squalestatins. The biosynthesis of SQS1 requires several oxidative steps likely performed by oxidoreductases M1, R1 and R2. Finally, in support of the identification of the cluster as being responsible for SQS1 production, the cluster contains a gene encoding a putative squalene synthase (SS) R6, suggesting a likely mechanism for self-resistance. The sequence is that of Probable copper-dependent oxygenase M1 from Phoma sp. (strain ATCC 20986 / MF5453).